The sequence spans 286 residues: Elongation factor Ts (286 aa).

Positions 82 to 85 (TDFV) are involved in Mg(2+) ion dislocation from EF-Tu. Positions 212 to 286 (VAAQTGQKVE…SPSKKGKKKK (75 aa)) are disordered. Residues 215 to 227 (QTGQKVEQPQAAQ) are compositionally biased toward polar residues. The segment covering 253–269 (ETDSPAAETTTEPPKTT) has biased composition (low complexity).

The protein belongs to the EF-Ts family.

It localises to the cytoplasm. In terms of biological role, associates with the EF-Tu.GDP complex and induces the exchange of GDP to GTP. It remains bound to the aminoacyl-tRNA.EF-Tu.GTP complex up to the GTP hydrolysis stage on the ribosome. The polypeptide is Elongation factor Ts (Gloeothece citriformis (strain PCC 7424) (Cyanothece sp. (strain PCC 7424))).